Consider the following 464-residue polypeptide: Heterogeneous nuclear ribonucleoprotein K (464 aa).

N-acetylmethionine is present on methionine 1. The interval 1–37 is disordered; it reads METEQPEETFPNTETNGEFGKRPAEDMEEEQAFKRSR. A necessary for interaction with DDX1 region spans residues 1–276; sequence METEQPEETF…GRGGRPMPPS (276 aa). Over residues 19–37 the composition is skewed to basic and acidic residues; that stretch reads FGKRPAEDMEEEQAFKRSR. Lysine 34 bears the N6-acetyllysine; alternate mark. Lysine 34 participates in a covalent cross-link: Glycyl lysine isopeptide (Lys-Gly) (interchain with G-Cter in SUMO1); alternate. Residue lysine 34 forms a Glycyl lysine isopeptide (Lys-Gly) (interchain with G-Cter in SUMO2); alternate linkage. Serine 36 is modified (phosphoserine). Position 39 is a phosphothreonine (threonine 39). One can recognise a KH 1 domain in the interval 42-104; that stretch reads MVELRILLQS…ETIGEILKKI (63 aa). Residues lysine 52 and lysine 60 each participate in a glycyl lysine isopeptide (Lys-Gly) (interchain with G-Cter in SUMO2) cross-link. Tandem repeats lie at residues 54–76 and 59–62. A 2 X 22 AA approximate repeats region spans residues 54–421; the sequence is AGAVIGKGGK…QIRHESGASI (368 aa). Positions 59–407 are 5 X 4 AA repeats of G-X-G-G; sequence GKGGKNIKAL…LAGSIIGKGG (349 aa). Phosphoserine is present on residues serine 75 and serine 116. The KH 2 domain maps to 144–209; sequence DCELRLLIHQ…DRVVECIKII (66 aa). Lysine 163 is covalently cross-linked (Glycyl lysine isopeptide (Lys-Gly) (interchain with G-Cter in SUMO1); alternate). Residue lysine 163 forms a Glycyl lysine isopeptide (Lys-Gly) (interchain with G-Cter in SUMO2); alternate linkage. An N6-acetyllysine modification is found at lysine 198. Phosphoserine occurs at positions 214 and 216. Residue lysine 219 forms a Glycyl lysine isopeptide (Lys-Gly) (interchain with G-Cter in SUMO2); alternate linkage. Position 219 is an N6-succinyllysine; alternate (lysine 219). Residues 236-273 form an RNA-binding RGG-box region; the sequence is YGGFTMMFDDRRGRPVGFPMRGRGGFDRMPPGRGGRPM. 3 repeat units span residues 245-250, 257-260, and 267-270. Positions 245–329 are 2 X 6 AA approximate repeats; the sequence is DRRGRPVGFP…LMAYDRRGRP (85 aa). The tract at residues 250–329 is disordered; the sequence is PVGFPMRGRG…LMAYDRRGRP (80 aa). Positions 252–266 are enriched in low complexity; it reads GFPMRGRGGFDRMPP. The span at 276–285 shows a compositional bias: basic and acidic residues; the sequence is SRRDYDDMSP. At serine 284 the chain carries Phosphoserine. One copy of the 3-4 repeat lies at 295–298; it reads GRGG. Position 316 is an omega-N-methylarginine (arginine 316). The stretch at 324–329 is one 2-2 repeat; the sequence is DRRGRP. At arginine 377 the chain carries Omega-N-methylarginine. Position 379 is a phosphoserine (serine 379). Tyrosine 380 is modified (phosphotyrosine). Residues 387-451 enclose the KH 3 domain; it reads IITTQVTIPK…DQIQNAQYLL (65 aa). Repeat copies occupy residues 399 to 421 and 404 to 407. Residue lysine 405 is modified to N6-acetyllysine; alternate. Lysine 405 participates in a covalent cross-link: Glycyl lysine isopeptide (Lys-Gly) (interchain with G-Cter in SUMO2); alternate. Residue serine 420 is modified to Phosphoserine. Lysine 422 is covalently cross-linked (Glycyl lysine isopeptide (Lys-Gly) (interchain with G-Cter in SUMO1); alternate). Lysine 422 participates in a covalent cross-link: Glycyl lysine isopeptide (Lys-Gly) (interchain with G-Cter in SUMO2); alternate. Lysine 422 is covalently cross-linked (Glycyl lysine isopeptide (Lys-Gly) (interchain with G-Cter in SUMO); alternate).

Identified in the spliceosome C complex. Interacts with ANKRD28, RBM42 and ZIK1. Interacts with DDX1. Interacts with MDM2; this interaction leads to ubiquitination and proteasomal degradation. Interacts with p53/TP53. Interacts with BRDT. Interacts with IVNS1ABP. Interacts with PPIA/CYPA. Part of a transcription inhibitory ribonucleoprotein complex composed at least of the circular RNA circZNF827, ZNF827 and HNRNPL. In terms of processing, sumoylated by CBX4. Sumoylation is increased upon DNA damage, such as that produced by doxorubicin, etoposide, UV light and camptothecin, due to enhanced CBX4 phosphorylation by HIPK2 under these conditions. Ubiquitinated by MDM2. Doxorubicin treatment does not affect monoubiquitination, but slightly decreases HNRNPK poly-ubiquitination. Post-translationally, O-glycosylated (O-GlcNAcylated), in a cell cycle-dependent manner.

The protein localises to the cytoplasm. It localises to the nucleus. The protein resides in the nucleoplasm. Its subcellular location is the cell projection. It is found in the podosome. One of the major pre-mRNA-binding proteins. Binds tenaciously to poly(C) sequences. Likely to play a role in the nuclear metabolism of hnRNAs, particularly for pre-mRNAs that contain cytidine-rich sequences. Can also bind poly(C) single-stranded DNA. Plays an important role in p53/TP53 response to DNA damage, acting at the level of both transcription activation and repression. When sumoylated, acts as a transcriptional coactivator of p53/TP53, playing a role in p21/CDKN1A and 14-3-3 sigma/SFN induction. As far as transcription repression is concerned, acts by interacting with long intergenic RNA p21 (lincRNA-p21), a non-coding RNA induced by p53/TP53. This interaction is necessary for the induction of apoptosis, but not cell cycle arrest. As part of a ribonucleoprotein complex composed at least of ZNF827, HNRNPL and the circular RNA circZNF827 that nucleates the complex on chromatin, may negatively regulate the transcription of genes involved in neuronal differentiation. This is Heterogeneous nuclear ribonucleoprotein K (HNRNPK) from Macaca fascicularis (Crab-eating macaque).